A 520-amino-acid polypeptide reads, in one-letter code: Peptide chain release factor 3 (520 aa).

The tr-type G domain maps to 8–277 (ESRKTFAIIS…HAPMPNARQT (270 aa)). Residues 17–24 (SHPDAGKT), 85–89 (DTPGH), and 139–142 (NKLD) contribute to the GTP site.

It belongs to the TRAFAC class translation factor GTPase superfamily. Classic translation factor GTPase family. PrfC subfamily.

It localises to the cytoplasm. Increases the formation of ribosomal termination complexes and stimulates activities of RF-1 and RF-2. It binds guanine nucleotides and has strong preference for UGA stop codons. It may interact directly with the ribosome. The stimulation of RF-1 and RF-2 is significantly reduced by GTP and GDP, but not by GMP. This is Peptide chain release factor 3 from Staphylococcus haemolyticus (strain JCSC1435).